Reading from the N-terminus, the 225-residue chain is Insulin-induced gene 2 protein (225 aa).

At 1 to 28 (MAENDAKPTLPKKSGPYISSVTSHGMNL) the chain is on the cytoplasmic side. Residues 29–51 (VIRGIVLFFIGVFLALVLNLLQI) traverse the membrane as a helical segment. Over 52–70 (QRNVTLFPPDVITSIFSSA) the chain is Lumenal. The chain crosses the membrane as a helical span at residues 71-88 (WWVPPCCGTASAVIGLLY). Over 89–103 (PCMDRHLGEPHKFKR) the chain is Cytoplasmic. A helical membrane pass occupies residues 104–126 (EWSSVMRCVAVFVGINHASAKVD). Topologically, residues 127–129 (FAN) are lumenal. Residues 130-148 (NIQLSLTLAALSIGLWWTF) form a helical membrane-spanning segment. Topologically, residues 149 to 153 (DRSRS) are cytoplasmic. Residues 154–175 (GFGLGVGIAFLATLVSQLLVYN) traverse the membrane as a helical segment. Over 176 to 189 (GVYQYTSPDFLYVR) the chain is Lumenal. The chain crosses the membrane as a helical span at residues 190 to 207 (SWLPCIFFAGGITMGNIG). Topologically, residues 208–225 (RQLAMYECKVIAEKSHED) are cytoplasmic. A KxHxx motif is present at residues 219-225 (AEKSHED).

This sequence belongs to the INSIG family. As to quaternary structure, interacts with SCAP; interaction is direct and only takes place in the presence of sterols; it prevents interaction between SCAP and the coat protein complex II (COPII). Associates with the SCAP-SREBP complex; association is mediated via its interaction with SCAP and only takes place in the presence of sterols.

Its subcellular location is the endoplasmic reticulum membrane. Oxysterol-binding protein that mediates feedback control of cholesterol synthesis by controlling both endoplasmic reticulum to Golgi transport of SCAP and degradation of HMGCR. Acts as a negative regulator of cholesterol biosynthesis by mediating the retention of the SCAP-SREBP complex in the endoplasmic reticulum, thereby blocking the processing of sterol regulatory element-binding proteins (SREBPs). Binds oxysterol, including 22-hydroxycholesterol, 24-hydroxycholesterol, 25-hydroxycholesterol and 27-hydroxycholesterol, regulating interaction with SCAP and retention of the SCAP-SREBP complex in the endoplasmic reticulum. In presence of oxysterol, interacts with SCAP, retaining the SCAP-SREBP complex in the endoplasmic reticulum, thereby preventing SCAP from escorting SREBPs to the Golgi. Sterol deprivation reduces oxysterol-binding, disrupting the interaction between INSIG2 and SCAP, thereby promoting Golgi transport of the SCAP-SREBP complex, followed by processing and nuclear translocation of SREBPs. Also regulates cholesterol synthesis by regulating degradation of HMGCR. The chain is Insulin-induced gene 2 protein from Gallus gallus (Chicken).